The following is a 311-amino-acid chain: Acyl-CoA dehydrogenase IpdE2 (311 aa).

Residues arginine 206 and glycine 273 each contribute to the FAD site.

The protein belongs to the acyl-CoA dehydrogenase family. As to quaternary structure, heterotetramer composed of 2 IpdE1 subunits and 2 IpdE2 subunits. The cofactor is FAD.

The enzyme catalyses 3-[(3aS,4S,5R,7aS)-5-hydroxy-7a-methyl-1-oxo-octahydro-1H-inden-4-yl]propanoyl-CoA + A = (2E)-3-[(3aS,4S,5R,7aS)-5-hydroxy-7a-methyl-1-oxo-octahydro-1H-inden-4-yl]prop-2-enoyl-CoA + AH2. Its pathway is steroid metabolism; cholesterol degradation. Involved in cholesterol degradation. Catalyzes the dehydrogenation of 5OH-HIP-CoA to 5OH-HIPE-CoA. This Mycolicibacterium smegmatis (strain ATCC 700084 / mc(2)155) (Mycobacterium smegmatis) protein is Acyl-CoA dehydrogenase IpdE2.